The following is a 298-amino-acid chain: Cell wall protein DAN1 (298 aa).

An N-terminal signal peptide occupies residues 1–19; it reads MSRISILAVAAALVASATA. Residues 122–168 are disordered; that stretch reads PASTTEASSTSTSEASSAATESSSSSESSAETSSNAASTQATVSSES. The GPI-anchor amidated asparagine moiety is linked to residue asparagine 275. A propeptide spans 276-298 (removed in mature form); that stretch reads GANKFNNGVFGAAAIAGAAALLL.

This sequence belongs to the SRP1/TIP1 family. Post-translationally, extensively O-glycosylated. The GPI-anchor is attached to the protein in the endoplasmic reticulum and serves to target the protein to the cell surface. There, the glucosamine-inositol phospholipid moiety is cleaved off and the GPI-modified mannoprotein is covalently attached via its lipidless GPI glycan remnant to the 1,6-beta-glucan of the outer cell wall layer.

The protein localises to the secreted. It localises to the cell wall. The protein resides in the membrane. Functionally, component of the cell wall. In Saccharomyces cerevisiae (strain ATCC 204508 / S288c) (Baker's yeast), this protein is Cell wall protein DAN1 (DAN1).